The primary structure comprises 316 residues: 4-diphosphocytidyl-2-C-methyl-D-erythritol kinase (316 aa).

Lys-14 is a catalytic residue. 96 to 106 contributes to the ATP binding site; that stretch reads PMGAGLGGGSS. The active site involves Asp-138.

Belongs to the GHMP kinase family. IspE subfamily.

It carries out the reaction 4-CDP-2-C-methyl-D-erythritol + ATP = 4-CDP-2-C-methyl-D-erythritol 2-phosphate + ADP + H(+). The protein operates within isoprenoid biosynthesis; isopentenyl diphosphate biosynthesis via DXP pathway; isopentenyl diphosphate from 1-deoxy-D-xylulose 5-phosphate: step 3/6. Functionally, catalyzes the phosphorylation of the position 2 hydroxy group of 4-diphosphocytidyl-2C-methyl-D-erythritol. The sequence is that of 4-diphosphocytidyl-2-C-methyl-D-erythritol kinase from Solibacter usitatus (strain Ellin6076).